We begin with the raw amino-acid sequence, 207 residues long: Ribosome maturation factor RimP (207 aa).

Belongs to the RimP family.

The protein localises to the cytoplasm. Required for maturation of 30S ribosomal subunits. In Parvibaculum lavamentivorans (strain DS-1 / DSM 13023 / NCIMB 13966), this protein is Ribosome maturation factor RimP.